The primary structure comprises 244 residues: MALRAQFENSNEIGVFSNLTNSYALVALGGSENFYSVFEAELGDVVPVVHTTIGGTRIIGRLTCGNRKGLLVPSSTTDNELQHLRNSLPDPVKIQRVDERLSALGNIVACNDYVALVHPDIERETEEIIADVLDVEVFRQTVAGNVLTGSYCALSNQGALVHPRTSIQEQDELSSLLQVPLVAGTINRGSDVIGAGLVVNDWCAFAGLDTTATELAVCESIFKLQDAQPSAIISNRDTLVESYT.

Residues serine 174 and serine 175 each carry the phosphoserine; by CK1 modification.

It belongs to the eIF-6 family. Monomer. Associates with the 60S ribosomal subunit. Post-translationally, phosphorylation at Ser-174 and Ser-175 promotes nuclear export.

It localises to the cytoplasm. Its subcellular location is the nucleus. The protein resides in the nucleolus. In terms of biological role, binds to the 60S ribosomal subunit and prevents its association with the 40S ribosomal subunit to form the 80S initiation complex in the cytoplasm. Is also involved in ribosome biogenesis. Associates with pre-60S subunits in the nucleus and is involved in its nuclear export. This Schizosaccharomyces pombe (strain 972 / ATCC 24843) (Fission yeast) protein is Eukaryotic translation initiation factor 6 (tif6).